We begin with the raw amino-acid sequence, 161 residues long: Peroxynitrite isomerase (161 aa).

The short motif at 17 to 23 (GSWVGRG) is the GXWXGXG element. H152 is a binding site for heme b.

The protein belongs to the nitrobindin family. As to quaternary structure, homodimer. Requires heme b as cofactor.

It carries out the reaction peroxynitrite = nitrate. It functions in the pathway nitrogen metabolism. Its function is as follows. Heme-binding protein able to scavenge peroxynitrite and to protect free L-tyrosine against peroxynitrite-mediated nitration, by acting as a peroxynitrite isomerase that converts peroxynitrite to nitrate. Therefore, this protein likely plays a role in peroxynitrite sensing and in the detoxification of reactive nitrogen and oxygen species (RNS and ROS, respectively). Is able to bind nitric oxide (NO) in vitro, but may act as a sensor of peroxynitrite levels in vivo. The sequence is that of Peroxynitrite isomerase from Mycobacterium leprae (strain TN).